Consider the following 254-residue polypeptide: Phosphate import ATP-binding protein PstB (254 aa).

Positions 9 to 249 constitute an ABC transporter domain; sequence MSVKDLDLFY…PVDKRTEDYI (241 aa). An ATP-binding site is contributed by 41 to 48; it reads GPSGCGKS.

The protein belongs to the ABC transporter superfamily. Phosphate importer (TC 3.A.1.7) family. In terms of assembly, the complex is composed of two ATP-binding proteins (PstB), two transmembrane proteins (PstC and PstA) and a solute-binding protein (PstS).

It localises to the cell membrane. It carries out the reaction phosphate(out) + ATP + H2O = ADP + 2 phosphate(in) + H(+). Its function is as follows. Part of the ABC transporter complex PstSACB involved in phosphate import. Responsible for energy coupling to the transport system. This chain is Phosphate import ATP-binding protein PstB, found in Clostridioides difficile (strain 630) (Peptoclostridium difficile).